A 306-amino-acid polypeptide reads, in one-letter code: Protoheme IX farnesyltransferase (306 aa).

The next 9 helical transmembrane spans lie at 35-55, 61-81, 106-126, 129-149, 157-177, 183-203, 224-244, 245-265, and 286-306; these read LIVFCALIGMVLAVPGVPTWL, LIACAGIWLVAGAAAAFNCLV, LTLAFSAGLCALGSWVLYVWV, LTMWLTFATFVGYAVVYTVIL, IVIGGASGAMPPVLGWAAMTG, ALILFLIIFLWTPPHFWALAL, EFTRLQVFLYTLVLFPACLMP, FIFKMSGWLYLVAAVLLSIGF, and RFSLIHLSALFAALLLDHYLI.

It belongs to the UbiA prenyltransferase family. Protoheme IX farnesyltransferase subfamily.

The protein localises to the cell inner membrane. It catalyses the reaction heme b + (2E,6E)-farnesyl diphosphate + H2O = Fe(II)-heme o + diphosphate. Its pathway is porphyrin-containing compound metabolism; heme O biosynthesis; heme O from protoheme: step 1/1. Functionally, converts heme B (protoheme IX) to heme O by substitution of the vinyl group on carbon 2 of heme B porphyrin ring with a hydroxyethyl farnesyl side group. The chain is Protoheme IX farnesyltransferase from Polaromonas naphthalenivorans (strain CJ2).